A 286-amino-acid polypeptide reads, in one-letter code: Phosphoribosylaminoimidazole-succinocarboxamide synthase (286 aa).

Belongs to the SAICAR synthetase family.

It carries out the reaction 5-amino-1-(5-phospho-D-ribosyl)imidazole-4-carboxylate + L-aspartate + ATP = (2S)-2-[5-amino-1-(5-phospho-beta-D-ribosyl)imidazole-4-carboxamido]succinate + ADP + phosphate + 2 H(+). It functions in the pathway purine metabolism; IMP biosynthesis via de novo pathway; 5-amino-1-(5-phospho-D-ribosyl)imidazole-4-carboxamide from 5-amino-1-(5-phospho-D-ribosyl)imidazole-4-carboxylate: step 1/2. The polypeptide is Phosphoribosylaminoimidazole-succinocarboxamide synthase (Actinobacillus succinogenes (strain ATCC 55618 / DSM 22257 / CCUG 43843 / 130Z)).